A 325-amino-acid chain; its full sequence is D site-binding protein (325 aa).

Disordered stretches follow at residues 1–98 (MARP…AGPS), 124–203 (LEHG…EVLM), and 230–256 (FSEEELKPQPIMKKARKVQVPEEQKDE). Over residues 17–28 (GPAGAPPGGGAL) the composition is skewed to gly residues. The segment covering 71–80 (AGPADAPSGA) has biased composition (low complexity). A Phosphoserine modification is found at Ser-86. A compositionally biased stretch (low complexity) spans 88–98 (RGRSGPVAGPS). Positions 129–153 (PPSPPPPGGLSPAPSPARTPAPSPG) are enriched in pro residues. Over residues 154-171 (PGSCSSSSPRSSPGHAPA) the composition is skewed to low complexity. The 64-residue stretch at 255–318 (DEKYWSRRYK…SHYRAVLSRY (64 aa)) folds into the bZIP domain. The basic motif stretch occupies residues 257 to 279 (KYWSRRYKNNEAAKRSRDARRLK). The tract at residues 283 to 297 (ISVRAAFLEKENALL) is leucine-zipper.

It belongs to the bZIP family. PAR subfamily. Binds DNA as a homodimer or a heterodimer. Can form a heterodimer with TEF. As to expression, expressed in the suprachiasmatic nuclei (SCN) and in most peripheral tissues, with a strong circadian rhythmicity.

It is found in the nucleus. Its function is as follows. This transcriptional activator recognizes and binds to the sequence 5'-RTTAYGTAAY-3' found in the promoter of genes such as albumin, CYP2A4 and CYP2A5. It is not essential for circadian rhythm generation, but modulates important clock output genes. May be a direct target for regulation by the circadian pacemaker component clock. May affect circadian period and sleep regulation. The protein is D site-binding protein (Dbp) of Mus musculus (Mouse).